The sequence spans 336 residues: UPF0324 membrane protein BR0028/BS1330_I0028 (336 aa).

11 helical membrane-spanning segments follow: residues isoleucine 9–leucine 26, arginine 36–leucine 55, phenylalanine 68–valine 90, glycine 94–glycine 116, leucine 128–alanine 150, alanine 160–leucine 182, isoleucine 189–leucine 211, leucine 221–asparagine 240, proline 247–leucine 269, alanine 279–isoleucine 301, and leucine 313–valine 335.

The protein belongs to the UPF0324 family.

The protein resides in the cell membrane. This is UPF0324 membrane protein BR0028/BS1330_I0028 from Brucella suis biovar 1 (strain 1330).